The primary structure comprises 35 residues: Leukocyte cysteine proteinase inhibitor 2 (35 aa).

A disordered region spans residues 1–35 (LAGGLTEPRPADTEIQEIANKVKPQLEEKTNKKYD). The span at 24 to 35 (PQLEEKTNKKYD) shows a compositional bias: basic and acidic residues.

The protein belongs to the cystatin family.

The protein resides in the cytoplasm. Functionally, potent inhibitor of cathepsins L and S, and papain. The chain is Leukocyte cysteine proteinase inhibitor 2 from Sus scrofa (Pig).